The following is a 1049-amino-acid chain: RTX-III toxin determinant A from serotype 2 (1049 aa).

The next 3 membrane-spanning stretches (helical) occupy residues 154–170 (TIISGIQSVLGTVLAGI), 315–331 (ALIASSISLAISPLAFL), and 397–413 (LVGAPITLLVTGITGLI). 6 Hemolysin-type calcium-binding repeats span residues 743–760 (KGSKFRDIFHGADGDDLL), 761–778 (NGNDGDDILYGDKGNDEL), 779–796 (RGDNGNDQLYGGEGDDKL), 797–814 (LGGNGNNYLSGGDGNDEL), 825–842 (RGGKGDDKLYGSSGSDLL), and 843–860 (DGGEGNDYLEGGDGSDFY).

This sequence belongs to the RTX prokaryotic toxin (TC 1.C.11) family. Post-translationally, palmitoylated by ApxIIIC. The toxin only becomes active when modified.

The protein localises to the secreted. The protein resides in the host cell membrane. Functionally, does not have hemolytic activity but shows a strong cytotoxicity towards alveolar macrophages and neutrophils. In Actinobacillus pleuropneumoniae (Haemophilus pleuropneumoniae), this protein is RTX-III toxin determinant A from serotype 2 (apxIIIA).